Consider the following 377-residue polypeptide: LIM/homeobox protein Lhx9 (377 aa).

LIM zinc-binding domains follow at residues 50 to 111 and 112 to 174; these read ALCA…RFSV and QRCA…LVQG. Disordered stretches follow at residues 228-249, 309-346, and 358-377; these read NENDADHLDRDQQPYPPSQKTK, RQENGGVDKADGTSLPPPSSDSGALTPPSTATTLTDLT, and SSLDSHDSGSPPQTTLTNLF. Positions 248–307 form a DNA-binding region, homeobox; the sequence is TKXMRTSFKHHQLRTMKSYFAINHNPDAKDLKQLAQKTGLTKRVLQVWFQNARAKFRRNV. Low complexity predominate over residues 333-346; the sequence is LTPPSTATTLTDLT. The span at 365-377 shows a compositional bias: polar residues; the sequence is SGSPPQTTLTNLF.

It localises to the nucleus. In terms of biological role, may be involved in gonadal development. The chain is LIM/homeobox protein Lhx9 (lhx9) from Psalidodon fasciatus (Banded astyanax).